Consider the following 277-residue polypeptide: Anamorsin homolog (277 aa).

Positions 1–134 (MALQGNVAIL…PFYPEFSDAV (134 aa)) are N-terminal SAM-like domain. Residues 135 to 191 (SFTSKKQSFESAAIPLAVKSTTTQPIKKWTVLADDFGDDQDDDIIDEDTLLDDTDEV) form a linker region. [2Fe-2S] cluster is bound by residues cysteine 199, cysteine 210, cysteine 213, and cysteine 215. The interval 199–215 (CGDAVGGKKRACKNCTC) is fe-S binding site A. [4Fe-4S] cluster is bound by residues cysteine 238, cysteine 241, cysteine 249, and cysteine 252. 2 consecutive short sequence motifs (cx2C motif) follow at residues 238–241 (CGNC) and 249–252 (CGSC). The interval 238–252 (CGNCFKGDAFRCGSC) is fe-S binding site B.

Belongs to the anamorsin family. In terms of assembly, monomer. The cofactor is [2Fe-2S] cluster. [4Fe-4S] cluster serves as cofactor.

It localises to the cytoplasm. It is found in the mitochondrion intermembrane space. Component of the cytosolic iron-sulfur (Fe-S) protein assembly (CIA) machinery. Required for the maturation of extramitochondrial Fe-S proteins. Part of an electron transfer chain functioning in an early step of cytosolic Fe-S biogenesis, facilitating the de novo assembly of a [4Fe-4S] cluster on the cytosolic Fe-S scaffold complex. Electrons are transferred from NADPH via a FAD- and FMN-containing diflavin oxidoreductase. Together with the diflavin oxidoreductase, also required for the assembly of the diferric tyrosyl radical cofactor of ribonucleotide reductase (RNR), probably by providing electrons for reduction during radical cofactor maturation in the catalytic small subunit. The protein is Anamorsin homolog of Phytophthora infestans (strain T30-4) (Potato late blight agent).